Consider the following 723-residue polypeptide: MSLLKERKPKKPHYIPRPPGKPFKYKCFQCPFTCNEKSHLFNHMKYGLCKNSITLVSEQDRVPKCPKSNSLDPKQTNQPDATAKPASSKSVANGLSAFDSKLQHSSAREDIKENLELQARGTHRCLGQKPALHRASPCKSPAPEAALGAQPALEGAARPSAFVPVGEHRLKGPDNAEAPETLALHNPTAKAVSFHTKSAFHTPGYPWKAGSPFLPPEFPHKISSTKGLGAISPYMHPTIPEYPPHFYTEHGLATIYSPYLLAGSSPECDAPLLSVYGTQDPRHFLPHPGPIPKHLAPSPATYDHYRFFQQYPSNLPIPYGFYRPESAFSSYGLRLPPVTGLTRDQSSHLLEEATLVYPASSPSRLNPSDPNRKHVEFESPIPEAKDSSKAGQRDTEGSKMSPRAGSAATGSPGRPSPTDFMQTSQTCEGLYDLSNKAASSALGRLYPPEQSLTAFRPVKKSTECLPAQAAETTAESPVSLNVVNGDPPAPTGSASLVSEAAPSSPDDSSGMGPLNLSKKSEINLAATHEPTYQGSPQAETASFSELQDLPLNLSVKDPCNTQAPRPAFPGRPRAAEPAAAVPQKTGTEGSEDGPSHPETKPGSLDGDGAPPTGPGEEAPDACAVDSSEEQKQTAAVALCQLAAYSPRNIRVGDGDAAAPEPACRQDTPTLSSMESQEAQCDLRPKGQKRTSLRDAGKSQQGAKKAKLQDTARVFTLRRRARVS.

Residues 25–51 form a CCHC-type zinc finger; sequence YKCFQCPFTCNEKSHLFNHMKYGLCKN. Zn(2+) is bound by residues Cys27, Cys30, His43, and Cys49. 5 disordered regions span residues 64–91, 132–153, 359–427, 466–630, and 650–723; these read KCPK…SKSV, LHRA…QPAL, ASSP…SQTC, PAQA…SEEQ, and RVGD…ARVS. The span at 67–91 shows a compositional bias: polar residues; it reads KSNSLDPKQTNQPDATAKPASSKSV. Residues 360–369 show a composition bias toward polar residues; that stretch reads SSPSRLNPSD. Residues 370–397 are compositionally biased toward basic and acidic residues; it reads PNRKHVEFESPIPEAKDSSKAGQRDTEG. Residues 470–482 are compositionally biased toward polar residues; sequence AETTAESPVSLNV. The segment covering 500–509 has biased composition (low complexity); the sequence is AAPSSPDDSS. Residues 530–545 show a composition bias toward polar residues; that stretch reads PTYQGSPQAETASFSE. 2 stretches are compositionally biased toward low complexity: residues 563-582 and 606-616; these read APRP…AAVP and GDGAPPTGPGE. The segment covering 666–678 has biased composition (polar residues); the sequence is DTPTLSSMESQEA.

Expressed in the skin, prostate, lung, placenta and thymus, and at low level in T-cells. Not expressed in peripheral blood leukocytes, pancreas and brain. Clearly expressed in primary keratinocytes but not in fibroblasts.

The protein resides in the nucleus. Functionally, transcription factor involved in epidermis differentiation. Required for terminal epidermal differentiation: acts downstream of p63/TP63 and activates expression of late epidermal differentiation genes. Specifically binds to the promoter of KLF4 and promotes its expression. The sequence is that of Zinc finger protein 750 (ZNF750) from Homo sapiens (Human).